A 236-amino-acid polypeptide reads, in one-letter code: Acetate--CoA ligase [ADP-forming] II subunit beta (236 aa).

Residues 26 to 62 form the ATP-grasp domain; that stretch reads KQVLKAYGLPVPEEKLAKTLDEALKYAEEIGYPVAMK. 52-63 lines the ATP pocket; that stretch reads AEEIGYPVAMKL.

The protein belongs to the acetate CoA ligase beta subunit family. As to quaternary structure, heterotetramer of two alpha and two beta subunits.

It carries out the reaction acetate + ATP + CoA = acetyl-CoA + ADP + phosphate. Catalyzes the reversible formation of acetate and ATP from acetyl-CoA by using ADP and phosphate. Can use other substrates such as phenylacetyl-CoA, indoleacetyl-CoA and isobutyryl-CoA, but not succinyl-CoA. Seems to be involved primarily in the degradation of aryl-CoA esters to the corresponding acids. Participates in the conversion of acetyl-CoA to acetate and in the degradation of branched-chain amino acids via branched-chain-acyl-CoA esters. The polypeptide is Acetate--CoA ligase [ADP-forming] II subunit beta (Pyrococcus furiosus (strain ATCC 43587 / DSM 3638 / JCM 8422 / Vc1)).